A 125-amino-acid polypeptide reads, in one-letter code: Large ribosomal subunit protein bL12 (125 aa).

The protein belongs to the bacterial ribosomal protein bL12 family. As to quaternary structure, homodimer. Part of the ribosomal stalk of the 50S ribosomal subunit. Forms a multimeric L10(L12)X complex, where L10 forms an elongated spine to which 2 to 4 L12 dimers bind in a sequential fashion. Binds GTP-bound translation factors.

Its function is as follows. Forms part of the ribosomal stalk which helps the ribosome interact with GTP-bound translation factors. Is thus essential for accurate translation. The chain is Large ribosomal subunit protein bL12 from Alkalilimnicola ehrlichii (strain ATCC BAA-1101 / DSM 17681 / MLHE-1).